The sequence spans 142 residues: 3-hydroxyacyl-[acyl-carrier-protein] dehydratase FabZ (142 aa).

Residue His-49 is part of the active site.

The protein belongs to the thioester dehydratase family. FabZ subfamily.

The protein resides in the cytoplasm. The enzyme catalyses a (3R)-hydroxyacyl-[ACP] = a (2E)-enoyl-[ACP] + H2O. In terms of biological role, involved in unsaturated fatty acids biosynthesis. Catalyzes the dehydration of short chain beta-hydroxyacyl-ACPs and long chain saturated and unsaturated beta-hydroxyacyl-ACPs. In Clostridium novyi (strain NT), this protein is 3-hydroxyacyl-[acyl-carrier-protein] dehydratase FabZ.